We begin with the raw amino-acid sequence, 558 residues long: 2-isopropylmalate synthase (558 aa).

Residues 30–303 (PIWCSVDLRD…DPKLDFSNIP (274 aa)) form the Pyruvate carboxyltransferase domain. Positions 39, 242, 244, and 278 each coordinate Mg(2+). A regulatory domain region spans residues 438 to 558 (LNNTLCVQDF…GLVSALNRII (121 aa)).

It belongs to the alpha-IPM synthase/homocitrate synthase family. LeuA type 2 subfamily. Homodimer. It depends on Mg(2+) as a cofactor.

It localises to the cytoplasm. The enzyme catalyses 3-methyl-2-oxobutanoate + acetyl-CoA + H2O = (2S)-2-isopropylmalate + CoA + H(+). It functions in the pathway amino-acid biosynthesis; L-leucine biosynthesis; L-leucine from 3-methyl-2-oxobutanoate: step 1/4. In terms of biological role, catalyzes the condensation of the acetyl group of acetyl-CoA with 3-methyl-2-oxobutanoate (2-ketoisovalerate) to form 3-carboxy-3-hydroxy-4-methylpentanoate (2-isopropylmalate). The protein is 2-isopropylmalate synthase of Helicobacter hepaticus (strain ATCC 51449 / 3B1).